We begin with the raw amino-acid sequence, 84 residues long: Putative membrane protein insertion efficiency factor (84 aa).

The interval 63 to 84 (WGGSGYDPVPGADPEHDRRPRG) is disordered. Basic and acidic residues predominate over residues 75–84 (DPEHDRRPRG).

This sequence belongs to the UPF0161 family.

Its subcellular location is the cell inner membrane. In terms of biological role, could be involved in insertion of integral membrane proteins into the membrane. The chain is Putative membrane protein insertion efficiency factor from Cereibacter sphaeroides (strain ATCC 17025 / ATH 2.4.3) (Rhodobacter sphaeroides).